The sequence spans 444 residues: Transcriptional regulatory protein GlrR (444 aa).

The Response regulatory domain maps to 7–121; the sequence is HLLLVDDDPG…ALYQAIDDAL (115 aa). 4-aspartylphosphate is present on Asp-56. The 231-residue stretch at 136-366 folds into the Sigma-54 factor interaction domain; sequence IVTRSPLMLR…VNVIEQCVAL (231 aa). Residues 164-171 and 227-236 contribute to the ATP site; these read GQSGTGKE and AEGGTLFLDE. A DNA-binding region (H-T-H motif) is located at residues 414–433; the sequence is VTHAARMAGRNRTEFYKLLS.

In terms of processing, phosphorylated by GlrK.

The protein resides in the cytoplasm. Functionally, member of the two-component regulatory system GlrR/GlrK that up-regulates transcription of the glmY sRNA when cells enter the stationary growth phase. Regulates glmY transcription by binding to three conserved sites in the purL-glmY intergenic region. The chain is Transcriptional regulatory protein GlrR (glrR) from Escherichia coli (strain K12).